Here is a 442-residue protein sequence, read N- to C-terminus: Glutamate--tRNA ligase 1 (442 aa).

The 'HIGH' region motif lies at 9–19; that stretch reads PSPTGKLHVGN. The short motif at 240-244 is the 'KMSKS' region element; sequence KLSKR. Residue lysine 243 coordinates ATP.

It belongs to the class-I aminoacyl-tRNA synthetase family. Glutamate--tRNA ligase type 1 subfamily. Monomer.

The protein resides in the cytoplasm. It catalyses the reaction tRNA(Glu) + L-glutamate + ATP = L-glutamyl-tRNA(Glu) + AMP + diphosphate. Its function is as follows. Catalyzes the attachment of glutamate to tRNA(Glu) in a two-step reaction: glutamate is first activated by ATP to form Glu-AMP and then transferred to the acceptor end of tRNA(Glu). This chain is Glutamate--tRNA ligase 1, found in Novosphingobium aromaticivorans (strain ATCC 700278 / DSM 12444 / CCUG 56034 / CIP 105152 / NBRC 16084 / F199).